Reading from the N-terminus, the 186-residue chain is Protein TRL14 (186 aa).

N-linked (GlcNAc...) asparagine; by host glycans are attached at residues asparagine 24, asparagine 64, and asparagine 72. Residues 143–163 traverse the membrane as a helical segment; the sequence is HAVWAGVVVSVALIALYMGSH.

The protein belongs to the RL11 family.

It is found in the virion membrane. The polypeptide is Protein TRL14 (Human cytomegalovirus (strain AD169) (HHV-5)).